The sequence spans 703 residues: DNA ligase (703 aa).

NAD(+) contacts are provided by residues 44–48 (DAEYD), 93–94 (SL), and Glu-127. Lys-129 (N6-AMP-lysine intermediate) is an active-site residue. Residues Arg-150, Glu-186, Lys-302, and Lys-326 each coordinate NAD(+). Zn(2+) contacts are provided by Cys-420, Cys-422, Cys-444, and Cys-450. The BRCT domain maps to 625–703 (VADSPVAGKT…EDMWFQRIGA (79 aa)).

Belongs to the NAD-dependent DNA ligase family. LigA subfamily. Mg(2+) is required as a cofactor. The cofactor is Mn(2+).

It catalyses the reaction NAD(+) + (deoxyribonucleotide)n-3'-hydroxyl + 5'-phospho-(deoxyribonucleotide)m = (deoxyribonucleotide)n+m + AMP + beta-nicotinamide D-nucleotide.. Functionally, DNA ligase that catalyzes the formation of phosphodiester linkages between 5'-phosphoryl and 3'-hydroxyl groups in double-stranded DNA using NAD as a coenzyme and as the energy source for the reaction. It is essential for DNA replication and repair of damaged DNA. The chain is DNA ligase from Chelativorans sp. (strain BNC1).